The sequence spans 278 residues: Elongation factor Ts (278 aa).

The interval 80–83 is involved in Mg(2+) ion dislocation from EF-Tu; it reads TDFV.

It belongs to the EF-Ts family.

It localises to the cytoplasm. In terms of biological role, associates with the EF-Tu.GDP complex and induces the exchange of GDP to GTP. It remains bound to the aminoacyl-tRNA.EF-Tu.GTP complex up to the GTP hydrolysis stage on the ribosome. This is Elongation factor Ts from Pseudarthrobacter chlorophenolicus (strain ATCC 700700 / DSM 12829 / CIP 107037 / JCM 12360 / KCTC 9906 / NCIMB 13794 / A6) (Arthrobacter chlorophenolicus).